A 614-amino-acid polypeptide reads, in one-letter code: Lamin-2 (614 aa).

Residues 1–10 (MSAQVSKKRG) show a composition bias toward basic residues. Positions 1-51 (MSAQVSKKRGGSNPPKTGQHAASSTTSRTESSATSQTIYERQEVETRTQRT) are disordered. The head stretch occupies residues 1 to 76 (MSAQVSKKRG…GTAGLAGSPL (76 aa)). A compositionally biased stretch (low complexity) spans 21-37 (AASSTTSRTESSATSQT). The coil 1A stretch occupies residues 77–117 (SRHQEKEEFKLLNNRFANYIDTIRAQQEEISVLRRKVETVS). The 353-residue stretch at 81–433 (EKEEFKLLNN…ALLRTEEERL (353 aa)) folds into the IF rod domain. Positions 118–128 (SKEVVENQKIK) are linker 1. The coil 1B stretch occupies residues 129-268 (ERYNLEIANL…EEIVSLRNQR (140 aa)). Positions 269–286 (RTEITEVETRMGEEYQSK) are linker 2. The segment at 287–426 (IVEQLNDLRA…AELATYNALL (140 aa)) is coil 2. The tail stretch occupies residues 427-611 (RTEEERLNMK…ADSSDHQKNC (185 aa)). The interval 433–454 (LNMKSPPFPSTPDSQRRGTKRR) is disordered. The short motif at 449 to 458 (RGTKRRIADS) is the Nuclear localization signal element. The LTD domain maps to 462–581 (TRFRNEASAT…VARREMTQSS (120 aa)). C611 is lipidated: S-farnesyl cysteine. Residues 612 to 614 (VIM) constitute a propeptide, removed in mature form.

Belongs to the intermediate filament family.

Its subcellular location is the nucleus inner membrane. Intermediate filament (IF) protein, component of the nuclear lamina, a fibrous layer on the nucleoplasmic side of the inner nuclear membrane, which is thought to provide a framework for the nuclear envelope. This is Lamin-2 from Hypsibius exemplaris (Freshwater tardigrade).